The primary structure comprises 218 residues: Elongation factor Ts (218 aa).

An involved in Mg(2+) ion dislocation from EF-Tu region spans residues 82 to 85 (TDFV).

Belongs to the EF-Ts family.

It localises to the cytoplasm. Associates with the EF-Tu.GDP complex and induces the exchange of GDP to GTP. It remains bound to the aminoacyl-tRNA.EF-Tu.GTP complex up to the GTP hydrolysis stage on the ribosome. This is Elongation factor Ts (tsf) from Synechocystis sp. (strain ATCC 27184 / PCC 6803 / Kazusa).